Reading from the N-terminus, the 828-residue chain is Periplasmic nitrate reductase (828 aa).

Positions M1–A32 form a signal peptide, tat-type signal. The region spanning I38–D94 is the 4Fe-4S Mo/W bis-MGD-type domain. [4Fe-4S] cluster contacts are provided by C45, C48, C52, and C80. Residues K82, Q149, N174, C178, W211 to M218, S242 to H246, Q261 to D263, M372, Q376, N482, S508 to D509, K531, D558, and T718 to T727 contribute to the Mo-bis(molybdopterin guanine dinucleotide) site. Substrate is bound at residue F794. The Mo-bis(molybdopterin guanine dinucleotide) site is built by N802 and K819.

The protein belongs to the prokaryotic molybdopterin-containing oxidoreductase family. NasA/NapA/NarB subfamily. In terms of assembly, component of the periplasmic nitrate reductase NapAB complex composed of NapA and NapB. [4Fe-4S] cluster serves as cofactor. The cofactor is Mo-bis(molybdopterin guanine dinucleotide). In terms of processing, predicted to be exported by the Tat system. The position of the signal peptide cleavage has not been experimentally proven.

The protein resides in the periplasm. The catalysed reaction is 2 Fe(II)-[cytochrome] + nitrate + 2 H(+) = 2 Fe(III)-[cytochrome] + nitrite + H2O. Functionally, catalytic subunit of the periplasmic nitrate reductase complex NapAB. Receives electrons from NapB and catalyzes the reduction of nitrate to nitrite. This chain is Periplasmic nitrate reductase, found in Pasteurella multocida (strain Pm70).